The following is a 357-amino-acid chain: UDP-N-acetylglucosamine--N-acetylmuramyl-(pentapeptide) pyrophosphoryl-undecaprenol N-acetylglucosamine transferase (357 aa).

UDP-N-acetyl-alpha-D-glucosamine-binding positions include 14–16 (TGG), Asn-126, Arg-162, Ser-190, Ile-246, 265–270 (ALTVCE), and Gln-290.

The protein belongs to the glycosyltransferase 28 family. MurG subfamily.

It is found in the cell inner membrane. It carries out the reaction di-trans,octa-cis-undecaprenyl diphospho-N-acetyl-alpha-D-muramoyl-L-alanyl-D-glutamyl-meso-2,6-diaminopimeloyl-D-alanyl-D-alanine + UDP-N-acetyl-alpha-D-glucosamine = di-trans,octa-cis-undecaprenyl diphospho-[N-acetyl-alpha-D-glucosaminyl-(1-&gt;4)]-N-acetyl-alpha-D-muramoyl-L-alanyl-D-glutamyl-meso-2,6-diaminopimeloyl-D-alanyl-D-alanine + UDP + H(+). The protein operates within cell wall biogenesis; peptidoglycan biosynthesis. Functionally, cell wall formation. Catalyzes the transfer of a GlcNAc subunit on undecaprenyl-pyrophosphoryl-MurNAc-pentapeptide (lipid intermediate I) to form undecaprenyl-pyrophosphoryl-MurNAc-(pentapeptide)GlcNAc (lipid intermediate II). The chain is UDP-N-acetylglucosamine--N-acetylmuramyl-(pentapeptide) pyrophosphoryl-undecaprenol N-acetylglucosamine transferase from Histophilus somni (strain 129Pt) (Haemophilus somnus).